The primary structure comprises 477 residues: Peptidyl-prolyl cis-trans isomerase FKBP53 (477 aa).

Disordered regions lie at residues 104–135 (DYEH…EDEQ) and 153–366 (AAAP…QVRT). The segment covering 264–274 (KSKKKKNQKEK) has biased composition (basic residues). Over residues 299–321 (ISQISSNTKAQDGTANNAMSESS) the composition is skewed to polar residues. A compositionally biased stretch (basic and acidic residues) spans 322-331 (KTPDKSAEKK). Over residues 351–366 (VEKQTPADSKSSQVRT) the composition is skewed to polar residues. The region spanning 389–477 (GKTVSVRYIG…TFDVELINVQ (89 aa)) is the PPIase FKBP-type domain.

This sequence belongs to the FKBP-type PPIase family. As to quaternary structure, interacts with histone H3. As to expression, broadly expressed in leaves, flowers, stems and roots. Detected in root apical meristem region and pollen.

It localises to the nucleus. It carries out the reaction [protein]-peptidylproline (omega=180) = [protein]-peptidylproline (omega=0). Its function is as follows. PPIases accelerate the folding of proteins. It catalyzes the cis-trans isomerization of proline imidic peptide bonds in oligopeptides. Histone chaperone possibly involved in H3/H4 deposition to the nucleosome. Associates with 18S rDNA chromatin and negatively regulates the level of its expression. The polypeptide is Peptidyl-prolyl cis-trans isomerase FKBP53 (FKBP53) (Arabidopsis thaliana (Mouse-ear cress)).